The following is a 70-amino-acid chain: Sec-independent protein translocase protein TatA (70 aa).

The chain crosses the membrane as a helical span at residues methionine 1–glycine 21. Residues aspartate 46–serine 70 are disordered.

It belongs to the TatA/E family. The Tat system comprises two distinct complexes: a TatABC complex, containing multiple copies of TatA, TatB and TatC subunits, and a separate TatA complex, containing only TatA subunits. Substrates initially bind to the TatABC complex, which probably triggers association of the separate TatA complex to form the active translocon.

The protein localises to the cell inner membrane. Its function is as follows. Part of the twin-arginine translocation (Tat) system that transports large folded proteins containing a characteristic twin-arginine motif in their signal peptide across membranes. TatA could form the protein-conducting channel of the Tat system. This chain is Sec-independent protein translocase protein TatA, found in Thiobacillus denitrificans (strain ATCC 25259 / T1).